Here is a 110-residue protein sequence, read N- to C-terminus: Small nuclear ribonucleoprotein Sm D2 (110 aa).

One can recognise a Sm domain in the interval 31–110; sequence MSLINDAMVT…VIVVLKTPVE (80 aa).

Belongs to the snRNP core protein family. Component of the Sm core complex, present in spliceosomal snRNP U1, U2, U4/U6 and U5. The core complex contains SMB1, SMD1, SMD2, SMD3, SME1, SMX3 and SMX2 (Sm proteins B, D1, D2, D3, E, F and G, respectively), and is probably a heptameric ring structure. Belongs to the CWC complex (or CEF1-associated complex), a spliceosome sub-complex reminiscent of a late-stage spliceosome composed of the U2, U5 and U6 snRNAs and at least BUD13, BUD31, BRR2, CDC40, CEF1, CLF1, CUS1, CWC2, CWC15, CWC21, CWC22, CWC23, CWC24, CWC25, CWC27, ECM2, HSH155, IST3, ISY1, LEA1, MSL1, NTC20, PRP8, PRP9, PRP11, PRP19, PRP21, PRP22, PRP45, PRP46, SLU7, SMB1, SMD1, SMD2, SMD3, SMX2, SMX3, SNT309, SNU114, SPP2, SYF1, SYF2, RSE1 and YJU2. Component of the U4/U6-U5 tri-snRNP complex composed of the U4, U6 and U5 snRNAs and at least PRP3, PRP4, PRP6, PRP8, PRP18, PRP31, PRP38, SNU13, SNU23, SNU66, SNU114, SPP381, SMB1, SMD1, SMD2, SMD3, SMX2, SMX3, LSM2, LSM3, LSM4, LSM5, LSM6, LSM7, LSM8, BRR2 and DIB1.

The protein resides in the nucleus. It is found in the cytoplasm. Its subcellular location is the cytosol. Functionally, plays a role in pre-mRNA splicing as a core component of the spliceosomal U1, U2, U4 and U5 small nuclear ribonucleoproteins (snRNPs), the building blocks of the spliceosome. In Saccharomyces cerevisiae (strain ATCC 204508 / S288c) (Baker's yeast), this protein is Small nuclear ribonucleoprotein Sm D2 (SMD2).